We begin with the raw amino-acid sequence, 315 residues long: Homoserine kinase (315 aa).

97–107 (PPARGLGSSAT) is a binding site for ATP.

This sequence belongs to the GHMP kinase family. Homoserine kinase subfamily.

The protein resides in the cytoplasm. It catalyses the reaction L-homoserine + ATP = O-phospho-L-homoserine + ADP + H(+). It participates in amino-acid biosynthesis; L-threonine biosynthesis; L-threonine from L-aspartate: step 4/5. In terms of biological role, catalyzes the ATP-dependent phosphorylation of L-homoserine to L-homoserine phosphate. The polypeptide is Homoserine kinase (Prochlorococcus marinus subsp. pastoris (strain CCMP1986 / NIES-2087 / MED4)).